The following is a 316-amino-acid chain: MKLRYLFILLIILAVTSVFIGVEDLSPLDLFDLSKQEASTLFASRLPRLISIVIAGLSMSICGLIMQQISRNKFVSPTTAGTMDWARLGILISLLLFTSASPLIKMLVAFVFALAGNFLFMKILERIKFNDTIFIPLVGLMLGNIVSSIATFIAYKYDLIQNVSSWLQGDFSLVVKGRYELLYLSIPLVIIAYVYADKFTLAGMGESFSVNLGLKYKRVVNIGLIIVSLITSLVILTVGMLPFLGLIIPNIVSIYRGDNLKSSLPHTVLLGAVFVLFCDILGRIIIFPYEISIGLMVGIIGSGIFLFMLLRRKAYA.

Helical transmembrane passes span 5–25, 49–69, 94–114, 133–153, 181–201, 224–244, 268–288, and 290–310; these read YLFI…VEDL, LISI…MQQI, LLLF…VFAL, IFIP…ATFI, LLYL…KFTL, LIIV…LPFL, VLLG…IIFP, and EISI…FMLL.

The protein belongs to the binding-protein-dependent transport system permease family. FecCD subfamily. As to quaternary structure, the complex is composed of two ATP-binding proteins (YclP), two transmembrane proteins (YclN and YclO) and a solute-binding protein (YclQ).

The protein resides in the cell membrane. Part of the ABC transporter complex YclNOPQ involved in uptake of ferric-petrobactin. Petrobactin is a photoreactive 3,4-catecholate siderophore produced by many members of the B.cereus group, including B.anthracis. Probably responsible for the translocation of the substrate across the membrane. The polypeptide is Petrobactin import system permease protein YclN (yclN) (Bacillus subtilis (strain 168)).